The following is a 211-amino-acid chain: MTSQRTRERLIQRLYEEGLSNAQVLEVIRRTPRHLFVDEALAHRAYEDTALPIGHNQTISQPYMVARMSELLLAAGPLDKVLEIGTGSGYQTAVLAQLVERVFSVERIKVLQDRAKERLVELNLRNVVFRWGDGWEGWPALAPYNGIIVTAVATDVPQALLDQLAPGGRLVIPVGSGEVQQLMLIIREDEGFSRHVLGAVRFVPLLNGPLA.

Ser60 is an active-site residue.

Belongs to the methyltransferase superfamily. L-isoaspartyl/D-aspartyl protein methyltransferase family.

Its subcellular location is the cytoplasm. The catalysed reaction is [protein]-L-isoaspartate + S-adenosyl-L-methionine = [protein]-L-isoaspartate alpha-methyl ester + S-adenosyl-L-homocysteine. In terms of biological role, catalyzes the methyl esterification of L-isoaspartyl residues in peptides and proteins that result from spontaneous decomposition of normal L-aspartyl and L-asparaginyl residues. It plays a role in the repair and/or degradation of damaged proteins. In Pseudomonas fluorescens (strain SBW25), this protein is Protein-L-isoaspartate O-methyltransferase.